The sequence spans 1313 residues: Inter-alpha-trypsin inhibitor heavy chain H6 (1313 aa).

Positions 1 to 23 are cleaved as a signal peptide; it reads MSGWRYLICVSFLLTILLELTYQ. The VIT domain maps to 24–150; the sequence is GPPVPASSST…EVTFSLAYEE (127 aa). N-linked (GlcNAc...) asparagine glycans are attached at residues Asn83, Asn374, Asn540, and Asn594. One can recognise a VWFA domain in the interval 283 to 469; sequence NVVFVIDVSS…LQLKGLYEEI (187 aa). Disordered stretches follow at residues 612–644, 783–817, 856–928, and 959–983; these read QPKQASEETRRQTSTSAGPDTIMPSSSSRHGLG, HSKPGAPSHPQLGALTSQAPKGLPQSRPGVSTLQV, LKPS…EPLP, and PSRPGVPTMSLLNSSRPTPEGSPPN. The segment covering 623–640 has biased composition (polar residues); the sequence is QTSTSAGPDTIMPSSSSR. Polar residues predominate over residues 864–875; that stretch reads QISTSISLSKPE. Over residues 876–888 the composition is skewed to pro residues; it reads TPNPHMPQTPLPP. Residues 907–921 are compositionally biased toward low complexity; that stretch reads TISSSTGPSSTTTTS. N-linked (GlcNAc...) asparagine glycosylation is found at Asn971 and Asn1231.

This sequence belongs to the ITIH family.

Its subcellular location is the secreted. The protein is Inter-alpha-trypsin inhibitor heavy chain H6 (ITIH6) of Homo sapiens (Human).